Here is a 274-residue protein sequence, read N- to C-terminus: SPbeta prophage-derived UPF0714 protein YoqZ (274 aa).

This sequence belongs to the UPF0714 family.

The sequence is that of SPbeta prophage-derived UPF0714 protein YoqZ (yoqZ) from Bacillus subtilis (strain 168).